A 209-amino-acid chain; its full sequence is PRA1 family protein E (209 aa).

Residues 1–20 (MNQKPPPYGYGGAGGGGVGP) are disordered. The span at 9 to 19 (GYGGAGGGGVG) shows a compositional bias: gly residues. The next 3 helical transmembrane spans lie at 90–110 (IVFL…VVFI), 132–152 (VDDK…LVYT), and 155–175 (GENV…HGAF).

It belongs to the PRA1 family. As to quaternary structure, interacts with PRA1B1, PRA1B2, PRA1B3, PRA1B4, PRA1B5 and PRA1B6. Expressed in hypocotyls, roots, lateral roots, columella cells, leaves and shoot apex.

It is found in the endosome membrane. In terms of biological role, may be involved in both secretory and endocytic intracellular trafficking in the endosomal/prevacuolar compartments. The polypeptide is PRA1 family protein E (PRA1E) (Arabidopsis thaliana (Mouse-ear cress)).